The following is a 241-amino-acid chain: Exosome complex component RRP41 homolog (241 aa).

Residue Met-1 is modified to N-acetylmethionine.

It belongs to the RNase PH family. Component of the RNA exosome complex. Interacts with RPP4.

Its subcellular location is the cytoplasm. It localises to the nucleus. It is found in the nucleolus. Its function is as follows. Non-catalytic component of the RNA exosome complex which has 3'-&gt;5' exoribonuclease activity and participates in a multitude of cellular RNA processing, maturation and degradation events. In vitro, is a processive phosphorolytic exonuclease and requires a single-stranded poly(A) tail on the substrate RNA for its activity. Can complement the growth defect of a yeast mutant lacking RRP41 exonuclease. Required for normal development of female gametophytes. This Arabidopsis thaliana (Mouse-ear cress) protein is Exosome complex component RRP41 homolog.